A 333-amino-acid polypeptide reads, in one-letter code: Tetraacyldisaccharide 4'-kinase (333 aa).

55–62 lines the ATP pocket; sequence TAGGNGKT.

It belongs to the LpxK family.

It catalyses the reaction a lipid A disaccharide + ATP = a lipid IVA + ADP + H(+). The protein operates within glycolipid biosynthesis; lipid IV(A) biosynthesis; lipid IV(A) from (3R)-3-hydroxytetradecanoyl-[acyl-carrier-protein] and UDP-N-acetyl-alpha-D-glucosamine: step 6/6. Functionally, transfers the gamma-phosphate of ATP to the 4'-position of a tetraacyldisaccharide 1-phosphate intermediate (termed DS-1-P) to form tetraacyldisaccharide 1,4'-bis-phosphate (lipid IVA). The polypeptide is Tetraacyldisaccharide 4'-kinase (Pectobacterium atrosepticum (strain SCRI 1043 / ATCC BAA-672) (Erwinia carotovora subsp. atroseptica)).